The chain runs to 344 residues: Heat-inducible transcription repressor HrcA (344 aa).

Belongs to the HrcA family.

Functionally, negative regulator of class I heat shock genes (grpE-dnaK-dnaJ and groELS operons). Prevents heat-shock induction of these operons. The chain is Heat-inducible transcription repressor HrcA from Desulforudis audaxviator (strain MP104C).